Consider the following 499-residue polypeptide: Neuronal acetylcholine receptor subunit alpha-3 (499 aa).

The N-terminal stretch at 1–25 (MGVVLLPPPLSMLMLVLMLLPAASA) is a signal peptide. Over 26–244 (SEAEHRLFQY…PLFYTINLII (219 aa)) the chain is Extracellular. N-linked (GlcNAc...) asparagine glycosylation is found at N49 and N166. Intrachain disulfides connect C153–C167 and C217–C218. Residues 245–260 (PCLLISFLTVLVFYLP) form a helical membrane-spanning segment. At 261–262 (SD) the chain is on the cytoplasmic side. The helical transmembrane segment at 263-279 (CGEKVTLCISVLLSLTV) threads the bilayer. Residue E265 participates in Na(+) binding. At 280–301 (FLLVITETIPSTSLVIPLIGEY) the chain is on the extracellular side. The helical transmembrane segment at 302 to 320 (LLFTMIFVTLSIVITVFVL) threads the bilayer. Residues 321-468 (NVHYRTPTTH…QDDWKYVAMV (148 aa)) are Cytoplasmic-facing. 2 positions are modified to phosphoserine: S407 and S410. The chain crosses the membrane as a helical span at residues 469-487 (IDRIFLWVFILVCILGTAG). Over 488-499 (LFLQPLMARDDT) the chain is Extracellular.

Belongs to the ligand-gated ion channel (TC 1.A.9) family. Acetylcholine receptor (TC 1.A.9.1) subfamily. Alpha-3/CHRNA3 sub-subfamily. Neuronal AChR is composed of two different types of subunits: alpha and beta. CHRNA3/Alpha-3 subunit can be combined to CHRNB2/beta-2 or CHRNB4/beta-4 to give rise to functional receptors. Part of a complex composed of STUB1/CHIP, VCP/p97, CHRNA3, and UBXN2A that modulates the ubiquitination and endoplasmic reticulum-associated degradation (ERAD) of CHRNA3. Within the complex UBXN2A acts as a scaffold protein required for the interaction of CHRNA3 with VCP/p97, this interaction also inhibits CHRNA3 ubiquitination by STUB1/CHIP and subsequently ERAD. Interacts with UBXN2A (via SEP domain), the interaction is required for the interaction of CHRNA3 in the STUB1:VCP:UBXN2A complex. Interacts with RIC3; which is required for proper folding and assembly. In terms of processing, ubiquitinated; by STUB1/CHIP and thereafter degraded by the 26S proteosome complex. In terms of tissue distribution, expressed in neurons. Expressed in umbrella cells of urothelium (at protein level).

The protein resides in the synaptic cell membrane. The protein localises to the cell membrane. Its subcellular location is the endoplasmic reticulum. It localises to the golgi apparatus. It carries out the reaction Ca(2+)(in) = Ca(2+)(out). It catalyses the reaction K(+)(in) = K(+)(out). The catalysed reaction is Na(+)(in) = Na(+)(out). Its activity is regulated as follows. Activated by a myriad of ligands such as acetylcholine, cytisine, nicotine, choline and epibatidine. The heteropentamer CHRNA3:CHRNB2 activity is blocked by alpha-conotoxins ImI, ImII, PnIA, GID and MII. The heteropentamer CHRNA3:CHRNB4 activity is blocked by the alpha-conotoxin ImI and AuIB. Its function is as follows. Component of neuronal acetylcholine receptors (nAChRs) that function as pentameric, ligand-gated cation channels with high calcium permeability among other activities. nAChRs are excitatory neurotrasnmitter receptors formed by a collection of nAChR subunits known to mediate synaptic transmission in the nervous system and the neuromuscular junction. Each nAchR subunit confers differential attributes to channel properties, including activation, deactivation and desensitization kinetics, pH sensitivity, cation permeability, and binding to allosteric modulators. CHRNA3 forms heteropentameric neuronal acetylcholine receptors with CHRNB2 and CHRNB4. CHRNA3:CHRNB4 being predominant in neurons of the autonomic ganglia, it is known as ganglionic nicotinic receptor. CHRNA3:CHRNB4 also plays an important role in the habenulo-interpeduncular tract, modulating the mesolimbic dopamine system and affecting reward circuits and addiction. Hypothalamic CHRNA3:CHRNB4 nAChR activation by nicotine leads to activation of POMC neurons and a decrease in food intake. Also expressed in the urothelium where it modulates reflex bladder activity by increasing intracellular calcium through extracellular influx and basal ATP release. The sequence is that of Neuronal acetylcholine receptor subunit alpha-3 (Chrna3) from Rattus norvegicus (Rat).